The chain runs to 352 residues: Mitochondrial hydrolase YKR070W (352 aa).

Belongs to the HAD-like hydrolase superfamily.

It localises to the mitochondrion. The protein is Mitochondrial hydrolase YKR070W of Saccharomyces cerevisiae (strain ATCC 204508 / S288c) (Baker's yeast).